Reading from the N-terminus, the 440-residue chain is tRNA(Ile)-lysidine synthase (440 aa).

25 to 30 (SGGVDS) serves as a coordination point for ATP.

This sequence belongs to the tRNA(Ile)-lysidine synthase family.

It is found in the cytoplasm. It catalyses the reaction cytidine(34) in tRNA(Ile2) + L-lysine + ATP = lysidine(34) in tRNA(Ile2) + AMP + diphosphate + H(+). Ligates lysine onto the cytidine present at position 34 of the AUA codon-specific tRNA(Ile) that contains the anticodon CAU, in an ATP-dependent manner. Cytidine is converted to lysidine, thus changing the amino acid specificity of the tRNA from methionine to isoleucine. The protein is tRNA(Ile)-lysidine synthase of Vibrio cholerae serotype O1 (strain ATCC 39315 / El Tor Inaba N16961).